Here is a 288-residue protein sequence, read N- to C-terminus: Ribosomal RNA small subunit methyltransferase A (288 aa).

S-adenosyl-L-methionine is bound by residues N37, L39, G64, E86, D112, and N131.

The protein belongs to the class I-like SAM-binding methyltransferase superfamily. rRNA adenine N(6)-methyltransferase family. RsmA subfamily.

The protein localises to the cytoplasm. It catalyses the reaction adenosine(1518)/adenosine(1519) in 16S rRNA + 4 S-adenosyl-L-methionine = N(6)-dimethyladenosine(1518)/N(6)-dimethyladenosine(1519) in 16S rRNA + 4 S-adenosyl-L-homocysteine + 4 H(+). Functionally, specifically dimethylates two adjacent adenosines (A1518 and A1519) in the loop of a conserved hairpin near the 3'-end of 16S rRNA in the 30S particle. May play a critical role in biogenesis of 30S subunits. The sequence is that of Ribosomal RNA small subunit methyltransferase A from Rhodospirillum rubrum (strain ATCC 11170 / ATH 1.1.1 / DSM 467 / LMG 4362 / NCIMB 8255 / S1).